Here is a 74-residue protein sequence, read N- to C-terminus: MFLIYLLVQTAESSWLSKTAKKLENSAKKRISEGIAIAIKGGSRRRRSVGEEDAIPSHIEVNKFFLRKPAKEHI.

The first 13 residues, 1 to 13, serve as a signal peptide directing secretion; the sequence is MFLIYLLVQTAES. Positions 45–74 are cleaved as a propeptide — removed in mature form; that stretch reads RRRSVGEEDAIPSHIEVNKFFLRKPAKEHI.

The protein belongs to the cecropin family. As to expression, expressed in the body wall, intestine, uterus and ovary.

The protein localises to the secreted. In terms of biological role, has antibacterial activity against several Gram-positive and Gram-negative bacteria. Is weakly active against yeasts. Acts by a nonpore mechanism. This chain is Cecropin-P3 (ASCEC-3), found in Ascaris suum (Pig roundworm).